The primary structure comprises 356 residues: RuBisCO accumulation factor 1 (356 aa).

Residues 7 to 185 (ALTTEVLQRL…RQALEKLLTD (179 aa)) are N-terminal alpha-helix. Positions 209-342 (PYLVPVAGTA…LLLVLRPPQV (134 aa)) are C-terminal beta-sheet.

Belongs to the RAF family. Homodimer. Forms an RbcL(8)-Raf1(8) complex. Forms complexes of many stoichiometries with RbcL with and without RbcS. RbcX and Raf1 can bind simultaneously to RbcL.

It localises to the cytoplasm. A major RuBisCO chaperone. Acts after GroEL-GroES chaperonin to fold and/or assemble the large subunit of RuBisCO (ccbL, rbcL). Cooperates with RbcX in RbcL folding, plays the major role in assembly of dimers into RbcL(8)-Raf1(8) intermediate complexes. RbcS replaces Raf1, leading to holoenzyme formation. In terms of biological role, required for optimal reconstitution of RuBisCO upon expression of rbcL-rbcS subunits in E.coli. Only interacts with the large subunit (cbbL, rbcL). Probably acts in the final stages of RuBisCO assembly, possibly participating in the addition of the small subunit (ccbS, rbcS). The sequence is that of RuBisCO accumulation factor 1 from Thermosynechococcus vestitus (strain NIES-2133 / IAM M-273 / BP-1).